Consider the following 617-residue polypeptide: MPSNTSRSVPTGFYYKQNARMQNRPRFSDRKHSSKSKHRFPVDPSLQPDEADEGTRLLGNSDSDLLEPPSEHSSNGEDDKDINNPPSMPSSVCSSPKSPHRHYESDEDIENISLPESHPEDIQRKEFETENGKNTRDQPSPLAEVSDFAISSPHVYPKSANSHDSHYEQFANNDVTESAVDDHPATRKLSRDELYLPISPNNAQEPKFSVLDEWTKKMVANFEEYSVEDVDKRRERNRKLSEPLLVNGRYRVRDRWAQFRKSEIEKPYRFTFFTDELPSTIHSHEMWELVHDGQSFEDLFHSGGTWWLDVSCPKEEEIRVLAKAFGIHPLTVEDITLEEDREKVELFRTYYFVTFRSFNQLPSNSEYLKPLNFYLVVFRDGIITFHMNPTPHPANVRRRIRQLNGYLTVNADWIAYALLDDTTDAFAPFIEQIEDEVDTIDSMILSIHYDHVMEVKPQERMLQRVGECRKLIMSLLRLLANKADVVRGLSKRCNESWQVAPRGEIALYLGDVQDHIVTMVQNLNHYEKILSRSHSNYLAQISINMTLVSNETNEVLSRLTILGTILIPLNLVTGLWGMNVKVPGQDVPGLGWFFSILGSLMIFAISSFILCKWYKVI.

The tract at residues 1 to 141 (MPSNTSRSVP…GKNTRDQPSP (141 aa)) is disordered. The residue at position 105 (S105) is a Phosphoserine. A compositionally biased stretch (basic and acidic residues) spans 117–136 (SHPEDIQRKEFETENGKNTR). A phosphoserine mark is found at S152, S162, S226, and S241. 2 helical membrane passes run 560 to 580 (TILG…GMNV) and 590 to 610 (LGWF…SFIL).

This sequence belongs to the CorA metal ion transporter (MIT) (TC 1.A.35) family. In terms of assembly, interacts with sad1.

Its subcellular location is the membrane. This is Putative metal ion transporter C17A12.14 from Schizosaccharomyces pombe (strain 972 / ATCC 24843) (Fission yeast).